The following is a 440-amino-acid chain: Streptokinase C (440 aa).

The N-terminal stretch at 1–26 is a signal peptide; it reads MKNYLSFGMFALLFALTFGTVNSVQA.

Its function is as follows. This protein is not a protease, but it activates plasminogen by complexing with it. As a potential virulence factor, it is thought to prevent the formation of effective fibrin barriers around the site of infection, thereby contributing to the invasiveness of the cells. This is Streptokinase C (skc) from Streptococcus dysgalactiae subsp. equisimilis (Streptococcus equisimilis).